We begin with the raw amino-acid sequence, 344 residues long: tRNA N6-adenosine threonylcarbamoyltransferase (344 aa).

Residues His112 and His116 each contribute to the Fe cation site. Substrate contacts are provided by residues 135 to 139, Asp168, Gly181, and Asn271; that span reads LVSGG. Asp299 contributes to the Fe cation binding site. The disordered stretch occupies residues 323–344; it reads RARPRWPLDPEAEPVRGAGVKA.

Belongs to the KAE1 / TsaD family. Fe(2+) serves as cofactor.

Its subcellular location is the cytoplasm. The catalysed reaction is L-threonylcarbamoyladenylate + adenosine(37) in tRNA = N(6)-L-threonylcarbamoyladenosine(37) in tRNA + AMP + H(+). Its function is as follows. Required for the formation of a threonylcarbamoyl group on adenosine at position 37 (t(6)A37) in tRNAs that read codons beginning with adenine. Is involved in the transfer of the threonylcarbamoyl moiety of threonylcarbamoyl-AMP (TC-AMP) to the N6 group of A37, together with TsaE and TsaB. TsaD likely plays a direct catalytic role in this reaction. The protein is tRNA N6-adenosine threonylcarbamoyltransferase of Erythrobacter litoralis (strain HTCC2594).